A 180-amino-acid chain; its full sequence is Oligoribonuclease (180 aa).

Positions 7-170 constitute an Exonuclease domain; it reads LIWIDLEMTG…DDIRESIAEL (164 aa). Tyr-128 is a catalytic residue.

The protein belongs to the oligoribonuclease family.

The protein resides in the cytoplasm. In terms of biological role, 3'-to-5' exoribonuclease specific for small oligoribonucleotides. This Ectopseudomonas mendocina (strain ymp) (Pseudomonas mendocina) protein is Oligoribonuclease.